A 68-amino-acid polypeptide reads, in one-letter code: Movement protein TGBp3 (68 aa).

At 1–6 the chain is on the lumenal side; it reads MFSGKE. Residues 7–26 form a helical membrane-spanning segment; that stretch reads ITLFALSTLIALIVLNYMSA. Residues 27–68 lie on the Cytoplasmic side of the membrane; the sequence is TPNPVCLIELTGHSAVLRGNNCESLTSGVIEALSAHLHGLRN.

Belongs to the Tymovirales TGBp3 protein family.

Its subcellular location is the host endoplasmic reticulum membrane. Functionally, plays a role in viral cell-to-cell propagation, by facilitating genome transport to neighboring plant cells through plasmosdesmata. May induce the formation of granular vesicles derived from the Endoplasmic reticulum, which align on actin filaments. The polypeptide is Movement protein TGBp3 (Papaya mosaic potexvirus (PMV)).